A 308-amino-acid chain; its full sequence is Ribosomal RNA small subunit methyltransferase H (308 aa).

Residues 32–34, Asp52, Phe78, Asp100, and Gln107 each bind S-adenosyl-L-methionine; that span reads GGH.

It belongs to the methyltransferase superfamily. RsmH family.

It localises to the cytoplasm. The enzyme catalyses cytidine(1402) in 16S rRNA + S-adenosyl-L-methionine = N(4)-methylcytidine(1402) in 16S rRNA + S-adenosyl-L-homocysteine + H(+). Its function is as follows. Specifically methylates the N4 position of cytidine in position 1402 (C1402) of 16S rRNA. The chain is Ribosomal RNA small subunit methyltransferase H from Legionella pneumophila (strain Corby).